Consider the following 101-residue polypeptide: Small ribosomal subunit protein uS14 (101 aa).

Belongs to the universal ribosomal protein uS14 family. As to quaternary structure, part of the 30S ribosomal subunit. Contacts proteins S3 and S10.

Its function is as follows. Binds 16S rRNA, required for the assembly of 30S particles and may also be responsible for determining the conformation of the 16S rRNA at the A site. In Aliivibrio fischeri (strain ATCC 700601 / ES114) (Vibrio fischeri), this protein is Small ribosomal subunit protein uS14.